The following is a 209-amino-acid chain: J domain-containing protein spf31 (209 aa).

A J domain is found at 31–96 (NAYDVLDILP…KIRESLDSAY (66 aa)). Disordered stretches follow at residues 149–175 (ANQQ…EKVW) and 187–209 (QDFL…RVLG). Residues 154-175 (EQARQDEIARERKRRVESEKVW) are compositionally biased toward basic and acidic residues. Basic residues predominate over residues 192–209 (KTKKNNLKKKNKKPRVLG).

In Schizosaccharomyces pombe (strain 972 / ATCC 24843) (Fission yeast), this protein is J domain-containing protein spf31 (spf31).